We begin with the raw amino-acid sequence, 212 residues long: ATP-dependent dethiobiotin synthetase BioD (212 aa).

12–17 provides a ligand contact to ATP; that stretch reads DCGKTF. T16 contributes to the Mg(2+) binding site. The active site involves K33. S37 is a binding site for substrate. Residues D50, 110-113, and 170-171 contribute to the ATP site; these read EGAG and NC. Positions 50 and 110 each coordinate Mg(2+).

It belongs to the dethiobiotin synthetase family. As to quaternary structure, homodimer. Mg(2+) is required as a cofactor.

The protein localises to the cytoplasm. The catalysed reaction is (7R,8S)-7,8-diammoniononanoate + CO2 + ATP = (4R,5S)-dethiobiotin + ADP + phosphate + 3 H(+). Its pathway is cofactor biosynthesis; biotin biosynthesis; biotin from 7,8-diaminononanoate: step 1/2. Its function is as follows. Catalyzes a mechanistically unusual reaction, the ATP-dependent insertion of CO2 between the N7 and N8 nitrogen atoms of 7,8-diaminopelargonic acid (DAPA, also called 7,8-diammoniononanoate) to form a ureido ring. This is ATP-dependent dethiobiotin synthetase BioD from Legionella pneumophila (strain Lens).